Here is a 469-residue protein sequence, read N- to C-terminus: MTAQTLYDKLWNSHVVREEEDGTVLLYIDRHLVHEVTSPQAFEGLKMAGRKLWRIDSVVSTADHNTPTGDWDKGIQDPISKLQVDTLDKNIKEFGALAYFPFMDKGQGIVHVMGPEQGATLPGMTVVCGDSHTSTHGAFGALAHGIGTSEVEHTMATQCITAKKSKSMLIAVDGKLKAGVTAKDVALYIIGQIGTAGGTGYAIEFGGEAIRSLSMEGRMTLCNMAIEAGARSGMVAVDQTTIDYVKDKPFAPEGEAWDKAVEYWRTLVSDEGAVFDKEYRFNAEDIEPQVTWGTSPEMVLDISSKVPNPAEETDPVKRSGMERALEYMGLEAGTPLNEIPVDIVFIGSCTNSRVEDLREAAAIAKDRKKAANVQRVLIVPGSGLVKEQAEKEGLDKIFIEAGFEWREPGCSMCLAMNADRLTPGQRCASTSNRNFEGRQGNGGRTHLVSPAMAAAAAVTGRFTDIRMMA.

Residues C349, C410, and C413 each coordinate [4Fe-4S] cluster.

The protein belongs to the aconitase/IPM isomerase family. LeuC type 1 subfamily. In terms of assembly, heterodimer of LeuC and LeuD. The cofactor is [4Fe-4S] cluster.

It carries out the reaction (2R,3S)-3-isopropylmalate = (2S)-2-isopropylmalate. The protein operates within amino-acid biosynthesis; L-leucine biosynthesis; L-leucine from 3-methyl-2-oxobutanoate: step 2/4. Catalyzes the isomerization between 2-isopropylmalate and 3-isopropylmalate, via the formation of 2-isopropylmaleate. This chain is 3-isopropylmalate dehydratase large subunit, found in Neisseria meningitidis serogroup A / serotype 4A (strain DSM 15465 / Z2491).